A 431-amino-acid polypeptide reads, in one-letter code: MPAIVLIGAQWGDEGKGKATDLLGGSVQWVVRYQGGNNAGHTVVLPNGENFALHLIPSGILTPGVTNVIGNGVVVDPGVLLTELAGLEERGIDTSGLILSADAHLLMPYHVAIDKVTERYLGSKKIGTTGRGIGPCYQDKVARIGIRVADVLDEESLRQKVHAALEFKNQVLVKIYNRKALDPDQVVDGVLEQAEGFKHRIADARLQLNQALERGETVLLEGSQGTLLDVDHGTYPFVTSSNPTAGGASVGSGIGPTRITTVLGILKAYTTRVGSGPFPTELFDEHGAYLAKTGGEVGVTTGRARRCGWFDAVIARYATRVNGITDYFLTKLDVLSSLQTVPICVGYEVDGKRTNEMPMTQSEIYRATPVYEELPGWWEDISGARQFEDLPAKAQDYVLRLEELAGAPMSCIGVGPGRDQTIVRRDILSRS.

GTP is bound by residues Gly-12 to Lys-18 and Gly-40 to Thr-42. Asp-13 functions as the Proton acceptor in the catalytic mechanism. Mg(2+) is bound by residues Asp-13 and Gly-40. Residues Asp-13–Lys-16, Asn-38–His-41, Thr-129, Arg-143, Gln-224, Thr-239, and Arg-303 each bind IMP. The active-site Proton donor is His-41. Substrate is bound at residue Val-299 to Arg-305. GTP contacts are provided by residues Arg-305, Lys-331 to Asp-333, and Gly-413 to Gly-415.

The protein belongs to the adenylosuccinate synthetase family. Homodimer. It depends on Mg(2+) as a cofactor.

The protein localises to the cytoplasm. It carries out the reaction IMP + L-aspartate + GTP = N(6)-(1,2-dicarboxyethyl)-AMP + GDP + phosphate + 2 H(+). It participates in purine metabolism; AMP biosynthesis via de novo pathway; AMP from IMP: step 1/2. Its function is as follows. Plays an important role in the de novo pathway of purine nucleotide biosynthesis. Catalyzes the first committed step in the biosynthesis of AMP from IMP. In Mycobacteroides abscessus (strain ATCC 19977 / DSM 44196 / CCUG 20993 / CIP 104536 / JCM 13569 / NCTC 13031 / TMC 1543 / L948) (Mycobacterium abscessus), this protein is Adenylosuccinate synthetase.